We begin with the raw amino-acid sequence, 323 residues long: uncharacterized protein (323 aa).

Positions 1-21 (MGSYYSTESTKSNESNETTNN) are disordered. G2 is lipidated: N-myristoyl glycine; by host.

This is an uncharacterized protein from Acanthamoeba polyphaga (Amoeba).